The primary structure comprises 394 residues: GDNF family receptor alpha-like (394 aa).

A signal peptide spans 1–18 (MIVFIFLAMGLSLENEYT). At 19 to 351 (SQTNNCTYLR…TGFHSPFNGE (333 aa)) the chain is on the extracellular side. Residues asparagine 23, asparagine 50, asparagine 62, asparagine 67, asparagine 103, and asparagine 116 are each glycosylated (N-linked (GlcNAc...) asparagine). 11 disulfide bridges follow: cysteine 131–cysteine 189, cysteine 138–cysteine 144, cysteine 155–cysteine 167, cysteine 162–cysteine 210, cysteine 191–cysteine 198, cysteine 220–cysteine 291, cysteine 227–cysteine 233, cysteine 244–cysteine 275, cysteine 252–cysteine 258, cysteine 269–cysteine 316, and cysteine 293–cysteine 304. The tract at residues 149-228 (ASYLKACSAN…TCLSVIRSCQ (80 aa)) is required for interaction with GDF15. The helical transmembrane segment at 352 to 371 (VIYAAMCMTVTCGILLLVMV) threads the bilayer. The Cytoplasmic segment spans residues 372-394 (KLRTSRISSKARDPSSIQIPGEL).

The protein belongs to the GDNFR family. Interacts (via the extracellular domain) with GDF15 and RET; receptor of GDF15, mediates cellular signaling through interaction with RET after GDF15-binding. Interaction with RET requires previous GDF15-binding. Post-translationally, cleaved and inactivated by MMP14, inhibiting the GDF15-GFRAL aversive response. As to expression, expressed in the brainstem, restricted to cells in the area postrema and the immediately adjacent region of the nucleus tractus solitarius (at protein level). Detected at low levels in testis and adipose tissue.

The protein localises to the cell membrane. Specifically inhibited by 3P10 monoclonal antibody. Strongly activated by LY3463251, a long-acting and stable agonist composed of GDF15 conjugated monomeric human IgG4 Fc. Its function is as follows. Brainstem-restricted receptor for GDF15 hormone, which triggers an aversive response, characterized by nausea, vomiting, and/or loss of appetite in response to various stresses. The aversive response is both required to reduce continuing exposure to those stresses at the time of exposure and to promote avoidance behavior in the future. The GDF15-GFRAL aversive response is triggered by stresses, such as anticancer drugs (camptothecin or cisplatin), cancers or drugs such as metformin. Upon interaction with its ligand, GDF15, mediates the GDF15-induced autophosphorylation and activation of the RET tyrosine kinase receptor, leading to activation of MAPK- and AKT- signaling pathways. Ligand-binding activates GFRAL-expressing neurons localized in the area postrema and nucleus tractus solitarius of the brainstem. The GDF15-GFRAL signal induces expression of genes involved in metabolism, such as lipid metabolism in adipose tissues. The protein is GDNF family receptor alpha-like of Homo sapiens (Human).